The primary structure comprises 963 residues: Glycine dehydrogenase (decarboxylating) (963 aa).

Lys710 bears the N6-(pyridoxal phosphate)lysine mark.

This sequence belongs to the GcvP family. In terms of assembly, the glycine cleavage system is composed of four proteins: P, T, L and H. Requires pyridoxal 5'-phosphate as cofactor.

It catalyses the reaction N(6)-[(R)-lipoyl]-L-lysyl-[glycine-cleavage complex H protein] + glycine + H(+) = N(6)-[(R)-S(8)-aminomethyldihydrolipoyl]-L-lysyl-[glycine-cleavage complex H protein] + CO2. The glycine cleavage system catalyzes the degradation of glycine. The P protein binds the alpha-amino group of glycine through its pyridoxal phosphate cofactor; CO(2) is released and the remaining methylamine moiety is then transferred to the lipoamide cofactor of the H protein. This is Glycine dehydrogenase (decarboxylating) from Pseudoalteromonas translucida (strain TAC 125).